The sequence spans 421 residues: Acetate kinase (421 aa).

Asn-7 is a binding site for Mg(2+). Lys-14 contributes to the ATP binding site. Arg-91 contacts substrate. The active-site Proton donor/acceptor is Asp-148. ATP-binding positions include 208 to 212 (HIGNG) and 283 to 285 (DRR). Glu-387 is a Mg(2+) binding site.

This sequence belongs to the acetokinase family. As to quaternary structure, homodimer. Requires Mg(2+) as cofactor. Mn(2+) is required as a cofactor.

It localises to the cytoplasm. The enzyme catalyses acetate + ATP = acetyl phosphate + ADP. The protein operates within metabolic intermediate biosynthesis; acetyl-CoA biosynthesis; acetyl-CoA from acetate: step 1/2. Catalyzes the formation of acetyl phosphate from acetate and ATP. Can also catalyze the reverse reaction. This is Acetate kinase from Geobacter sulfurreducens (strain ATCC 51573 / DSM 12127 / PCA).